Here is a 213-residue protein sequence, read N- to C-terminus: Orotate phosphoribosyltransferase (213 aa).

Lys-26 lines the 5-phospho-alpha-D-ribose 1-diphosphate pocket. Orotate is bound at residue 34–35; that stretch reads FF. Residues 72–73, Arg-99, Lys-100, Lys-103, His-105, and 124–132 contribute to the 5-phospho-alpha-D-ribose 1-diphosphate site; these read YK and DDVITAGTA. Orotate contacts are provided by Thr-128 and Arg-156.

Belongs to the purine/pyrimidine phosphoribosyltransferase family. PyrE subfamily. In terms of assembly, homodimer. Mg(2+) is required as a cofactor.

It catalyses the reaction orotidine 5'-phosphate + diphosphate = orotate + 5-phospho-alpha-D-ribose 1-diphosphate. Its pathway is pyrimidine metabolism; UMP biosynthesis via de novo pathway; UMP from orotate: step 1/2. Catalyzes the transfer of a ribosyl phosphate group from 5-phosphoribose 1-diphosphate to orotate, leading to the formation of orotidine monophosphate (OMP). The chain is Orotate phosphoribosyltransferase from Escherichia coli O139:H28 (strain E24377A / ETEC).